The primary structure comprises 226 residues: Ribosomal RNA large subunit methyltransferase E (226 aa).

Residues 1–25 (MVKPPAGGNEGGRGKPARLKTAYGR) are disordered. Positions 82, 84, 100, 116, and 140 each coordinate S-adenosyl-L-methionine. Catalysis depends on lysine 180, which acts as the Proton acceptor.

It belongs to the class I-like SAM-binding methyltransferase superfamily. RNA methyltransferase RlmE family.

Its subcellular location is the cytoplasm. It carries out the reaction uridine(2552) in 23S rRNA + S-adenosyl-L-methionine = 2'-O-methyluridine(2552) in 23S rRNA + S-adenosyl-L-homocysteine + H(+). Specifically methylates the uridine in position 2552 of 23S rRNA at the 2'-O position of the ribose in the fully assembled 50S ribosomal subunit. In Caulobacter vibrioides (strain ATCC 19089 / CIP 103742 / CB 15) (Caulobacter crescentus), this protein is Ribosomal RNA large subunit methyltransferase E.